Reading from the N-terminus, the 752-residue chain is Photosystem I P700 chlorophyll a apoprotein A1 (752 aa).

The next 8 helical transmembrane spans lie at 73–96, 159–182, 198–222, 294–312, 349–372, 388–414, 436–458, and 533–551; these read IFSA…FHGA, LYWI…FHYH, MNHH…HVAL, IAHH…GHMY, WHAQ…HHMY, LSLF…IFMV, SIIA…FYIH, and FMVH…LILL. [4Fe-4S] cluster is bound by residues Cys-575 and Cys-584. The next 2 membrane-spanning stretches (helical) occupy residues 591 to 612 and 666 to 688; these read HVFL…HFSW and ASAY…MFLF. A chlorophyll a'-binding site is contributed by His-677. Positions 685 and 693 each coordinate chlorophyll a. Trp-694 is a phylloquinone binding site. Residues 726-746 traverse the membrane as a helical segment; the sequence is AVGLAHYLLGGIGTTWAFFLA.

It belongs to the PsaA/PsaB family. The PsaA/B heterodimer binds the P700 chlorophyll special pair and subsequent electron acceptors. PSI consists of a core antenna complex that captures photons, and an electron transfer chain that converts photonic excitation into a charge separation. The eukaryotic PSI reaction center is composed of at least 11 subunits. Requires P700 is a chlorophyll a/chlorophyll a' dimer, A0 is one or more chlorophyll a, A1 is one or both phylloquinones and FX is a shared 4Fe-4S iron-sulfur center. as cofactor.

It localises to the plastid. The protein localises to the chloroplast thylakoid membrane. It carries out the reaction reduced [plastocyanin] + hnu + oxidized [2Fe-2S]-[ferredoxin] = oxidized [plastocyanin] + reduced [2Fe-2S]-[ferredoxin]. In terms of biological role, psaA and PsaB bind P700, the primary electron donor of photosystem I (PSI), as well as the electron acceptors A0, A1 and FX. PSI is a plastocyanin/cytochrome c6-ferredoxin oxidoreductase, converting photonic excitation into a charge separation, which transfers an electron from the donor P700 chlorophyll pair to the spectroscopically characterized acceptors A0, A1, FX, FA and FB in turn. Oxidized P700 is reduced on the lumenal side of the thylakoid membrane by plastocyanin or cytochrome c6. The protein is Photosystem I P700 chlorophyll a apoprotein A1 of Phaeodactylum tricornutum (strain CCAP 1055/1).